Consider the following 144-residue polypeptide: Glutaredoxin-C6 (144 aa).

Residues 39–143 enclose the Glutaredoxin domain; that stretch reads EAKIRRLISE…PKLVQVGALW (105 aa). Cysteines 59 and 62 form a disulfide.

The protein belongs to the glutaredoxin family. CC-type subfamily.

The protein localises to the cytoplasm. Its function is as follows. Has a glutathione-disulfide oxidoreductase activity in the presence of NADPH and glutathione reductase. Reduces low molecular weight disulfides and proteins. The protein is Glutaredoxin-C6 (GRXC6) of Arabidopsis thaliana (Mouse-ear cress).